The following is an 824-amino-acid chain: Glycophorin-binding protein 130 (824 aa).

The PEXEL motif motif lies at arginine 84 to glutamate 88. 11 disordered regions span residues glutamate 97–methionine 236, asparagine 258–serine 291, aspartate 310–glutamine 334, asparagine 358–glutamine 384, asparagine 408–glutamate 431, asparagine 457–glycine 482, asparagine 507–glycine 532, aspartate 559–glycine 582, aspartate 659–glutamine 683, asparagine 711–glutamine 733, and aspartate 759–glutamine 783. Composition is skewed to basic and acidic residues over residues threonine 117–glutamine 140 and lysine 174–alanine 198. Positions lysine 200–serine 228 are enriched in polar residues. GBP repeat units lie at residues leucine 226–aspartate 275, leucine 276–aspartate 325, leucine 326–aspartate 375, leucine 376–glutamate 424, leucine 425–aspartate 474, leucine 475–aspartate 524, leucine 525–aspartate 574, leucine 575–glutamate 624, leucine 625–aspartate 674, leucine 675–aspartate 724, leucine 725–aspartate 774, and leucine 775–alanine 824. Composition is skewed to basic and acidic residues over residues glutamate 264–leucine 276, aspartate 314–leucine 326, glutamate 364–leucine 376, glutamate 414–threonine 426, glutamate 463–leucine 475, glutamate 513–leucine 525, glutamate 563–leucine 575, glutamate 663–leucine 675, glutamate 713–leucine 725, and aspartate 763–leucine 775.

Interacts with host glycophorin.

It is found in the secreted. Its subcellular location is the cell surface. The protein resides in the host cytoplasm. Involved in merozoite invasion of host erythrocytes. The protein is Glycophorin-binding protein 130 of Plasmodium falciparum (isolate 3D7).